A 262-amino-acid polypeptide reads, in one-letter code: Spindlin-1 (262 aa).

Residues 1–51 form a disordered region; it reads MKTPFGKTPGQRSRADAGHAGVSANMMKKRTSHKKHRSSVGPSKPVSQPRR. Glycyl lysine isopeptide (Lys-Gly) (interchain with G-Cter in SUMO2) cross-links involve residues Lys-7 and Lys-28. Residues 27–38 show a composition bias toward basic residues; it reads MKKRTSHKKHRS. Lys-44 carries the post-translational modification N6-acetyllysine; alternate. Residue Lys-44 forms a Glycyl lysine isopeptide (Lys-Gly) (interchain with G-Cter in SUMO2); alternate linkage. A tudor-like domain 1 region spans residues 53-116; it reads IVGCRIQHGW…RVSALEVLPD (64 aa). The histone H3K4me3 and H3R8me2a binding stretch occupies residues 93–98; sequence GFDCVY. 2 positions are modified to phosphoserine; by AURKA: Ser-109 and Ser-124. A tudor-like domain 2 region spans residues 132-193; that stretch reads MIGKAVEHMF…DYKEGDLRIM (62 aa). Residue Glu-142 is a region of interest, histone H3K4me3 and H3R8me2a binding. At Ser-199 the chain carries Phosphoserine. The tudor-like domain 3 stretch occupies residues 213-262; it reads LVGKQVEYAKEDGSKRTGMVIHQVEAKPSVYFIKFDDDFHIYVYDLVKTS. The tract at residues 250-252 is histone H3K4me3 and H3R8me2a binding; that stretch reads DFH.

This sequence belongs to the SPIN/STSY family. As to quaternary structure, homodimer; may form higher-order oligomers. Interacts with TCF7L2/TCF4; the interaction is direct. Interacts with HABP4 and SERBP1. Interacts with SPINDOC; SPINDOC stabilizes SPIN1 and enhances its association with bivalent H3K4me3K9me3 mark. Interacts with SPOCD1; promoting recruitment of PIWIL4 and SPOCD1 to transposons. Post-translationally, phosphorylated during oocyte meiotic maturation. Highly expressed in ovarian cancer tissues.

The protein resides in the nucleus. Its subcellular location is the nucleolus. Chromatin reader that specifically recognizes and binds histone H3 both trimethylated at 'Lys-4' and 'Lys-9' (H3K4me3K9me3) and is involved in piRNA-mediated retrotransposon silencing during spermatogenesis. Plays a key role in the initiation of the PIWIL4-piRNA pathway, a pathway that directs transposon DNA methylation and silencing in the male embryonic germ cells, by promoting recruitment of DNA methylation machinery to transposons: binds young, but not old, LINE1 transposons, which are specifically marked with H3K4me3K9me3, and promotes the recruitment of PIWIL4 and SPOCD1 to transposons, leading to piRNA-directed DNA methylation. Also recognizes and binds histone H3 both trimethylated at 'Lys-4' and asymmetrically dimethylated at 'Arg-8' (H3K4me3 and H3R8me2a) and acts as an activator of Wnt signaling pathway downstream of PRMT2. In case of cancer, promotes cell cancer proliferation via activation of the Wnt signaling pathway. Overexpression induces metaphase arrest and chromosomal instability. Localizes to active rDNA loci and promotes the expression of rRNA genes. May play a role in cell-cycle regulation during the transition from gamete to embryo. Involved in oocyte meiotic resumption, a process that takes place before ovulation to resume meiosis of oocytes blocked in prophase I: may act by regulating maternal transcripts to control meiotic resumption. This Homo sapiens (Human) protein is Spindlin-1.